We begin with the raw amino-acid sequence, 311 residues long: Metal-staphylopine import system permease protein CntB (311 aa).

6 helical membrane passes run 9-29 (IALM…LTYI), 105-125 (LTII…VVSA), 139-159 (VAFF…IIYV), 173-193 (GPES…GIYF), 237-257 (IFCM…YIFA), and 274-294 (FPVI…FNTL). Residues 99 to 295 (FMNTLKLTII…VLFIVFNTLA (197 aa)) form the ABC transmembrane type-1 domain.

This sequence belongs to the binding-protein-dependent transport system permease family. The complex is composed of two ATP-binding proteins (CntD and CntF), two transmembrane proteins (CntB and CntC) and a solute-binding protein (CntA).

The protein resides in the cell membrane. Nickel/cobalt import is reduced in the presence of zinc. In terms of biological role, part of the ABC transporter complex CntABCDF (Opp1) involved in the uptake of metal in complex with the metallophore staphylopine (StP). Involved in the import of divalent metals ions such as nickel, cobalt and zinc. Probably responsible for the translocation of the substrate across the membrane. Plays a major role in nickel/cobalt import in zinc-depleted conditions. Contributes to virulence. Required for full urease activity in vitro. In Staphylococcus aureus (strain NCTC 8325 / PS 47), this protein is Metal-staphylopine import system permease protein CntB.